The sequence spans 409 residues: NADH-quinone oxidoreductase subunit D (409 aa).

This sequence belongs to the complex I 49 kDa subunit family. As to quaternary structure, NDH-1 is composed of 14 different subunits. Subunits NuoB, C, D, E, F, and G constitute the peripheral sector of the complex.

The protein localises to the cell inner membrane. It carries out the reaction a quinone + NADH + 5 H(+)(in) = a quinol + NAD(+) + 4 H(+)(out). Its function is as follows. NDH-1 shuttles electrons from NADH, via FMN and iron-sulfur (Fe-S) centers, to quinones in the respiratory chain. The immediate electron acceptor for the enzyme in this species is believed to be ubiquinone. Couples the redox reaction to proton translocation (for every two electrons transferred, four hydrogen ions are translocated across the cytoplasmic membrane), and thus conserves the redox energy in a proton gradient. This chain is NADH-quinone oxidoreductase subunit D, found in Helicobacter acinonychis (strain Sheeba).